Reading from the N-terminus, the 387-residue chain is Alkanesulfonate monooxygenase (387 aa).

This sequence belongs to the SsuD family.

The catalysed reaction is an alkanesulfonate + FMNH2 + O2 = an aldehyde + FMN + sulfite + H2O + 2 H(+). Catalyzes the desulfonation of aliphatic sulfonates. This chain is Alkanesulfonate monooxygenase, found in Xanthomonas axonopodis pv. citri (strain 306).